A 722-amino-acid polypeptide reads, in one-letter code: Transmembrane channel-like protein 8 (722 aa).

The disordered stretch occupies residues 1–21 (MFRQWSVQSGPAPRRPESQAA). Residues 1 to 118 (MFRQWSVQSG…GIQSYFTFLR (118 aa)) lie on the Cytoplasmic side of the membrane. A phosphoserine mark is found at Ser6 and Ser18. Residues 119–139 (FLLLLNLLTMLLTACFVLLPL) form a helical membrane-spanning segment. Topologically, residues 140–204 (VWLRPPELGP…AGPESSSEYS (65 aa)) are lumenal. N-linked (GlcNAc...) asparagine glycosylation occurs at Asn184. A helical transmembrane segment spans residues 205–225 (IRLAYLLSPMVCLLLCFCGIL). Residues 226–307 (QRMAEGLPQQ…CRLLTYLRTN (82 aa)) lie on the Cytoplasmic side of the membrane. The chain crosses the membrane as a helical span at residues 308 to 328 (ILIVLLVVGAISAIFWATKYS). Topologically, residues 329–375 (QDNKEESLFLVLQYLPPGVISLVNFLGPQLFTVLIQLENYPPGTEVN) are lumenal. The interval 366–534 (ENYPPGTEVN…SPRRFRASSS (169 aa)) is TMC domain. The N-linked (GlcNAc...) asparagine glycan is linked to Asn375. Residues 376 to 396 (LTLIWCVVLKLASLGMFSFSL) form a helical membrane-spanning segment. The Cytoplasmic portion of the chain corresponds to 397–430 (GQTVLCIGRNKTSCESYGYNACDYQCWENSVGEE). A helical transmembrane segment spans residues 431–451 (LYKLIIFNFLLTVAFAFLVSL). Residues 452 to 492 (PRRLLVERFSGWFWTWLDREEFLVPKNVLDIVAAQTVTWMG) are Lumenal-facing. Residues 493 to 513 (LFYCPLLPLLNSVFLFLTFYI) traverse the membrane as a helical segment. Over 514–536 (KKYTLLRNSRASPRRFRASSSTF) the chain is Cytoplasmic. Residues 537–557 (FFHLVLLLGLLLAAVPLAYVI) form a helical membrane-spanning segment. Over 558–598 (SSTHSSWDCGLFTNYSAPWQVVPELVALQLPLPSQRALRYL) the chain is Lumenal. Residue Asn571 is glycosylated (N-linked (GlcNAc...) asparagine). The helical transmembrane segment at 599–619 (SSHAFSFPLLILLSIVLTVCI) threads the bilayer. Topologically, residues 620 to 722 (SQSRANARAI…RFHFPSRTEL (103 aa)) are cytoplasmic. Ser658, Ser663, and Ser673 each carry phosphoserine. Residues 658–722 (SPEPGSPHSR…RFHFPSRTEL (65 aa)) form a disordered region. The segment covering 678 to 687 (FPCPGSPGPR) has biased composition (pro residues). Residues 689 to 712 (PRLAPSNRLSSSSLGAPSASVPAS) show a composition bias toward low complexity. At Ser698 the chain carries Phosphoserine.

It belongs to the TMC family. In terms of assembly, interacts with TMC6. Interacts and forms a complex with TMC6 and CIB1; the interaction stabilizes each component of the complex. Interacts and forms a complex with TMC6 and SLC30A1/ZNT1; the interaction regulates zinc transport into the ER. Interacts with TRADD; the interaction competes with TRADD/RIPK1/TRAF2/cIAPs complex I formation and facilites complex II formation. As to expression, expressed in thymus, lung, prostate, placenta, testis and spleen. Expressed in lymphocytes and peripheral lymphocytes.

The protein resides in the endoplasmic reticulum membrane. The protein localises to the golgi apparatus membrane. It is found in the nucleus membrane. In terms of biological role, acts as a regulatory protein involved in the regulation of numerous cellular processes. Together with its homolog TMC6/EVER1, forms a complex with calcium-binding protein CIB1 in lymphocytes and keratynocytes where TMC6 and TMC8 stabilize CIB1 levels and reciprocally. Together with TMC6, also forms a complex with and activates zinc transporter ZNT1 at the ER membrane of keratynocytes, thereby facilitating zinc uptake into the ER. Also inhibits receptor-mediated calcium release from ER stores and calcium activated and volume regulated chloride channels. Down-regulates the activity of transcription factors induced by zinc and cytokines. Also sequesters TRADD which impairs the recruitment of TRAF2 and RIPK1 in the pro-survival complex I and promotes proapoptotic complex II formation, and may therefore be involved in TNF-induced cell death/survival decisions. The protein is Transmembrane channel-like protein 8 of Mus musculus (Mouse).